The chain runs to 93 residues: Small ribosomal subunit protein uS19 (93 aa).

The protein belongs to the universal ribosomal protein uS19 family.

Protein S19 forms a complex with S13 that binds strongly to the 16S ribosomal RNA. The protein is Small ribosomal subunit protein uS19 of Leptospira borgpetersenii serovar Hardjo-bovis (strain JB197).